A 67-amino-acid polypeptide reads, in one-letter code: Large ribosomal subunit protein bL32 (67 aa).

Basic residues predominate over residues 1–19 (MAVPKRKMSRANTRARRSQ). The interval 1 to 21 (MAVPKRKMSRANTRARRSQWK) is disordered.

This sequence belongs to the bacterial ribosomal protein bL32 family.

This chain is Large ribosomal subunit protein bL32, found in Micrococcus luteus (strain ATCC 4698 / DSM 20030 / JCM 1464 / CCM 169 / CCUG 5858 / IAM 1056 / NBRC 3333 / NCIMB 9278 / NCTC 2665 / VKM Ac-2230) (Micrococcus lysodeikticus).